The following is a 126-amino-acid chain: Holo-[acyl-carrier-protein] synthase (126 aa).

Mg(2+) is bound by residues aspartate 8 and glutamate 56.

It belongs to the P-Pant transferase superfamily. AcpS family. The cofactor is Mg(2+).

It localises to the cytoplasm. The enzyme catalyses apo-[ACP] + CoA = holo-[ACP] + adenosine 3',5'-bisphosphate + H(+). Transfers the 4'-phosphopantetheine moiety from coenzyme A to a Ser of acyl-carrier-protein. This Clostridium tetani (strain Massachusetts / E88) protein is Holo-[acyl-carrier-protein] synthase.